The primary structure comprises 213 residues: Thiamine-phosphate synthase (213 aa).

4-amino-2-methyl-5-(diphosphooxymethyl)pyrimidine is bound by residues 39–43 (QYRDK) and Asp-71. Mg(2+) is bound by residues Asp-72 and Asp-91. Ser-108 provides a ligand contact to 4-amino-2-methyl-5-(diphosphooxymethyl)pyrimidine. A 2-[(2R,5Z)-2-carboxy-4-methylthiazol-5(2H)-ylidene]ethyl phosphate-binding site is contributed by 135-137 (TDT). Lys-138 serves as a coordination point for 4-amino-2-methyl-5-(diphosphooxymethyl)pyrimidine. 2-[(2R,5Z)-2-carboxy-4-methylthiazol-5(2H)-ylidene]ethyl phosphate-binding positions include Gly-165 and 185–186 (VS).

The protein belongs to the thiamine-phosphate synthase family. Mg(2+) is required as a cofactor.

It catalyses the reaction 2-[(2R,5Z)-2-carboxy-4-methylthiazol-5(2H)-ylidene]ethyl phosphate + 4-amino-2-methyl-5-(diphosphooxymethyl)pyrimidine + 2 H(+) = thiamine phosphate + CO2 + diphosphate. The enzyme catalyses 2-(2-carboxy-4-methylthiazol-5-yl)ethyl phosphate + 4-amino-2-methyl-5-(diphosphooxymethyl)pyrimidine + 2 H(+) = thiamine phosphate + CO2 + diphosphate. The catalysed reaction is 4-methyl-5-(2-phosphooxyethyl)-thiazole + 4-amino-2-methyl-5-(diphosphooxymethyl)pyrimidine + H(+) = thiamine phosphate + diphosphate. It participates in cofactor biosynthesis; thiamine diphosphate biosynthesis; thiamine phosphate from 4-amino-2-methyl-5-diphosphomethylpyrimidine and 4-methyl-5-(2-phosphoethyl)-thiazole: step 1/1. Its function is as follows. Condenses 4-methyl-5-(beta-hydroxyethyl)thiazole monophosphate (THZ-P) and 2-methyl-4-amino-5-hydroxymethyl pyrimidine pyrophosphate (HMP-PP) to form thiamine monophosphate (TMP). The sequence is that of Thiamine-phosphate synthase from Thermoplasma acidophilum (strain ATCC 25905 / DSM 1728 / JCM 9062 / NBRC 15155 / AMRC-C165).